A 1856-amino-acid polypeptide reads, in one-letter code: DNA-directed RNA polymerase II subunit RPB1 (1856 aa).

Zn(2+)-binding residues include C66, C69, C76, H79, C106, C109, C149, and C177. Positions 256–268 (PAVVTFGSAKNQD) are lid loop. Residues 314–331 (NCIPGLPTATQKGGRPLK) are rudder loop. Residues D489, D491, and D493 each coordinate Mg(2+). A bridging helix region spans residues 827–839 (PSEFFFHAMGGRE). A Glycyl lysine isopeptide (Lys-Gly) (interchain with G-Cter in ubiquitin) cross-link involves residue K1260. Residues 1523–1856 (PTTGGMSPGA…PSSPTYDPNS (334 aa)) form a disordered region. The span at 1587–1856 (SMTSPHYSPT…PSSPTYDPNS (270 aa)) shows a compositional bias: low complexity. 27 consecutive repeat copies span residues 1593 to 1599 (YSPTSPS), 1600 to 1606 (YSPTSPA), 1616 to 1622 (YSPTSPS), 1623 to 1629 (YSPTSPS), 1630 to 1636 (YSPTSPS), 1637 to 1643 (YSPTSPS), 1644 to 1650 (YSPTSPS), 1651 to 1657 (YSPTSPS), 1658 to 1664 (YSPSSPS), 1665 to 1671 (YSPSSPS), 1672 to 1678 (YSPSSPR), 1679 to 1685 (YSPTSPT), 1686 to 1692 (YSPTSPT), 1693 to 1699 (YSPTSPT), 1700 to 1706 (YSPTSPT), 1707 to 1713 (YSPTSPS), 1720 to 1726 (YSPSSPK), 1727 to 1733 (YSPSSPT), 1734 to 1740 (YSPTSPS), 1741 to 1747 (YSPTSPQ), 1748 to 1754 (YSPTSPQ), 1755 to 1761 (YSPSSPT), 1769 to 1775 (YNPTSPR), 1782 to 1788 (YSPTSPT), 1789 to 1795 (YSPTSPS), 1796 to 1802 (YTPSSPQ), and 1803 to 1809 (YSPTSPT). The tract at residues 1593–1816 (YSPTSPSYSP…SPTYTPSPSE (224 aa)) is C-terminal domain (CTD); 28 X 7 AA approximate tandem repeats of Y-[ST]-P-[ST]-S-P-[AGKNQRST]. A 28; approximate repeat occupies 1810–1816 (YTPSPSE).

Belongs to the RNA polymerase beta' chain family. Component of the RNA polymerase II (Pol II) complex consisting of 12 subunits. Interacts with sig-7. In terms of processing, the tandem 7 residues repeats in the C-terminal domain (CTD) can be highly phosphorylated. The phosphorylation activates Pol II. Phosphorylation occurs mainly at residues 'Ser-2' and 'Ser-5' of the heptapeptide repeat and starts at the 3- to 4-cell embryonic stage. This phosphorylation also occurs in the early stages of oocyte development and is not detected in oocytes arrested at the meiotic diakinesis stage. In the somatic lineage, phosphorylation at 'Ser-2' is mediated by cdk-12 downstream of cdk-9 whereas in the germline lineage cdk-12 phosphorylates 'Ser-2' independently of cdk-9. Phosphorylation is likely mediated by cdk-7. May be dephosphorylated by fcp-1 in diakinetic oocytes and in 1-cell and 2-cell embryos. Dephosphorylated at 'Ser-5' of the heptapeptide repeats by ssup-72. The phosphorylation state is believed to result from the balanced action of site-specific CTD kinases and phosphatase, and a 'CTD code' that specifies the position of Pol II within the transcription cycle has been proposed. Following transcription stress, the elongating form of RNA polymerase II (RNA pol IIo) is polyubiquitinated via 'Lys-63'-linkages on Lys-1260 at DNA damage sites without leading to degradation: ubiquitination promotes RNA pol IIo backtracking to allow access by the transcription-coupled nucleotide excision repair (TC-NER) machinery. Subsequent DEF1-dependent polyubiquitination by the elongin complex via 'Lys-48'-linkages may lead to proteasome-mediated degradation; presumably at stalled RNA pol II where TC-NER has failed, to halt global transcription and enable 'last resort' DNA repair pathways.

The protein localises to the nucleus. Its subcellular location is the chromosome. It carries out the reaction RNA(n) + a ribonucleoside 5'-triphosphate = RNA(n+1) + diphosphate. In terms of biological role, DNA-dependent RNA polymerase catalyzes the transcription of DNA into RNA using the four ribonucleoside triphosphates as substrates. Largest and catalytic component of RNA polymerase II which synthesizes mRNA precursors and many functional non-coding RNAs. Forms the polymerase active center together with the second largest subunit. Pol II is the central component of the basal RNA polymerase II transcription machinery. It is composed of mobile elements that move relative to each other. RPB1 is part of the core element with the central large cleft, the clamp element that moves to open and close the cleft and the jaws that are thought to grab the incoming DNA template. At the start of transcription, a single-stranded DNA template strand of the promoter is positioned within the central active site cleft of Pol II. A bridging helix emanates from RPB1 and crosses the cleft near the catalytic site and is thought to promote translocation of Pol II by acting as a ratchet that moves the RNA-DNA hybrid through the active site by switching from straight to bent conformations at each step of nucleotide addition. During transcription elongation, Pol II moves on the template as the transcript elongates. Elongation is influenced by the phosphorylation status of the C-terminal domain (CTD) of Pol II largest subunit (RPB1), which serves as a platform for assembly of factors that regulate transcription initiation, elongation, termination and mRNA processing. Involved in the transcription of several genes including those involved in embryogenesis. The protein is DNA-directed RNA polymerase II subunit RPB1 of Caenorhabditis elegans.